Consider the following 214-residue polypeptide: Coiled-coil domain-containing protein 169 (214 aa).

The stretch at 29–154 forms a coiled coil; sequence DAVQLSIFEL…NERRTYLAEM (126 aa). The span at 155–170 shows a compositional bias: polar residues; that stretch reads SQGSGLHQVSKRQQVD. The segment at 155–214 is disordered; sequence SQGSGLHQVSKRQQVDQLPRMQENLVKTGRYNPAKQKTVSAKRGPVKKITRPNHLPELHP.

Belongs to the CCDC169 family.

The polypeptide is Coiled-coil domain-containing protein 169 (CCDC169) (Homo sapiens (Human)).